The primary structure comprises 835 residues: Lon protease (835 aa).

Residues 4-224 (LPYIAIRNQL…LAINMLINAI (221 aa)) form the Lon N-terminal domain. ATP is bound at residue 412–419 (GPPGTGKT). The Lon proteolytic domain maps to 649–832 (QPKAGVVNAL…DEIFKYIFEA (184 aa)). Catalysis depends on residues Ser738 and Lys781.

This sequence belongs to the peptidase S16 family. In terms of assembly, homohexamer. Organized in a ring with a central cavity.

It localises to the cytoplasm. It carries out the reaction Hydrolysis of proteins in presence of ATP.. Its function is as follows. ATP-dependent serine protease that mediates the selective degradation of mutant and abnormal proteins as well as certain short-lived regulatory proteins. Required for cellular homeostasis and for survival from DNA damage and developmental changes induced by stress. Degrades polypeptides processively to yield small peptide fragments that are 5 to 10 amino acids long. Binds to DNA in a double-stranded, site-specific manner. The protein is Lon protease of Metamycoplasma arthritidis (strain 158L3-1) (Mycoplasma arthritidis).